The following is a 103-amino-acid chain: Histone H4, minor (103 aa).

Residues 1-12 (MAGGKGGKGMGK) show a composition bias toward gly residues. A disordered region spans residues 1–29 (MAGGKGGKGMGKVGAKRHSRKSNKASIEG). Lys5, Lys8, Lys12, and Lys16 each carry N6-acetyllysine. Over residues 14–23 (GAKRHSRKSN) the composition is skewed to basic residues. A DNA-binding region spans residues 16–21 (KRHSRK).

This sequence belongs to the histone H4 family. As to quaternary structure, the nucleosome is a histone octamer containing two molecules each of H2A, H2B, H3 and H4 assembled in one H3-H4 heterotetramer and two H2A-H2B heterodimers. The octamer wraps approximately 147 bp of DNA.

Its subcellular location is the nucleus. The protein resides in the chromosome. In terms of biological role, core component of nucleosome. Nucleosomes wrap and compact DNA into chromatin, limiting DNA accessibility to the cellular machineries which require DNA as a template. Histones thereby play a central role in transcription regulation, DNA repair, DNA replication and chromosomal stability. DNA accessibility is regulated via a complex set of post-translational modifications of histones, also called histone code, and nucleosome remodeling. This chain is Histone H4, minor, found in Tetrahymena pyriformis.